The sequence spans 464 residues: Galactose-proton symporter (464 aa).

Topologically, residues 1-15 (MPDAKKQGRSNKAMT) are cytoplasmic. The chain crosses the membrane as a helical span at residues 16–36 (FFVCFLAALAGLLFGLDIGVI). Over 37–56 (AGALPFIADEFQITSHTQEW) the chain is Periplasmic. A helical membrane pass occupies residues 57 to 77 (VVSSMMFGAAVGAVGSGWLSF). At 78–84 (KLGRKKS) the chain is on the cytoplasmic side. Residues 85 to 105 (LMIGAILFVAGSLFSAAAPNV) traverse the membrane as a helical segment. Over 106–112 (EVLILSR) the chain is Periplasmic. Residues 113–133 (VLLGLAVGVASYTAPLYLSEI) form a helical membrane-spanning segment. The Cytoplasmic segment spans residues 134 to 139 (APEKIR). A helical transmembrane segment spans residues 140–160 (GSMISMYQLMITIGILGAYLS). At 161–171 (DTAFSYTGAWR) the chain is on the periplasmic side. Residues 172–192 (WMLGVIIIPAILLLIGVFFLP) traverse the membrane as a helical segment. Over 193–250 (DSPRWFAAKRRFVDAERVLLRLRDTSAEAKRELDEIRESLQVKQSGWALFKENSNFRR) the chain is Cytoplasmic. The chain crosses the membrane as a helical span at residues 251–271 (AVFLGVLLQVMQQFTGMNVIM). Topologically, residues 272–290 (YYAPKIFELAGYTNTTEQM) are periplasmic. Residues 291–311 (WGTVIVGLTNVLATFIAIGLV) form a helical membrane-spanning segment. Residues 312-321 (DRWGRKPTLT) are Cytoplasmic-facing. A helical membrane pass occupies residues 322–342 (LGFLVMAAGMGVLGTMMHIGI). The Periplasmic portion of the chain corresponds to 343 to 351 (HSPSAQYFA). Residues 352 to 372 (IAMLLMFIVGFAMSAGPLIWV) form a helical membrane-spanning segment. Residues 373-394 (LCSEIQPLKGRDFGITCSTATN) lie on the Cytoplasmic side of the membrane. Residues 395-415 (WIANMIVGATFLTMLNTLGNA) form a helical membrane-spanning segment. Residue asparagine 416 is a topological domain, periplasmic. The chain crosses the membrane as a helical span at residues 417 to 437 (TFWVYAALNVLFILLTLWLVP). The Cytoplasmic portion of the chain corresponds to 438–464 (ETKHVSLEHIERNLMKGRKLREIGAHD).

It belongs to the major facilitator superfamily. Sugar transporter (TC 2.A.1.1) family.

The protein localises to the cell inner membrane. Uptake of galactose across the boundary membrane with the concomitant transport of protons into the cell (symport system). The protein is Galactose-proton symporter (galP) of Escherichia coli O6:H1 (strain CFT073 / ATCC 700928 / UPEC).